Reading from the N-terminus, the 195-residue chain is ATP-dependent Clp protease proteolytic subunit (195 aa).

Ser98 functions as the Nucleophile in the catalytic mechanism. The active site involves His123.

This sequence belongs to the peptidase S14 family. In terms of assembly, fourteen ClpP subunits assemble into 2 heptameric rings which stack back to back to give a disk-like structure with a central cavity, resembling the structure of eukaryotic proteasomes.

Its subcellular location is the cytoplasm. The catalysed reaction is Hydrolysis of proteins to small peptides in the presence of ATP and magnesium. alpha-casein is the usual test substrate. In the absence of ATP, only oligopeptides shorter than five residues are hydrolyzed (such as succinyl-Leu-Tyr-|-NHMec, and Leu-Tyr-Leu-|-Tyr-Trp, in which cleavage of the -Tyr-|-Leu- and -Tyr-|-Trp bonds also occurs).. Its function is as follows. Cleaves peptides in various proteins in a process that requires ATP hydrolysis. Has a chymotrypsin-like activity. Plays a major role in the degradation of misfolded proteins. The protein is ATP-dependent Clp protease proteolytic subunit of Helicobacter pylori (strain G27).